A 149-amino-acid chain; its full sequence is uncharacterized protein (149 aa).

This is an uncharacterized protein from Mycoplasma pneumoniae (strain ATCC 29342 / M129 / Subtype 1) (Mycoplasmoides pneumoniae).